The sequence spans 455 residues: Bifunctional protein GlmU (455 aa).

Residues 1 to 228 (MYKCALVLAA…FEETIGVNSR (228 aa)) form a pyrophosphorylase region. Residues 8–11 (LAAG), K22, Q73, and 78–79 (GT) each bind UDP-N-acetyl-alpha-D-glucosamine. D103 lines the Mg(2+) pocket. UDP-N-acetyl-alpha-D-glucosamine is bound by residues G140, E154, N169, and N226. N226 contributes to the Mg(2+) binding site. The linker stretch occupies residues 229–249 (AQLAQAEEILKDRINLKHMEN). Residues 250-455 (GVTLIDPKTT…GWVDKKGLKK (206 aa)) are N-acetyltransferase. R331 and K349 together coordinate UDP-N-acetyl-alpha-D-glucosamine. The active-site Proton acceptor is the H361. UDP-N-acetyl-alpha-D-glucosamine is bound by residues Y364 and N375. Acetyl-CoA-binding positions include 384–385 (NY), A421, and R438.

It in the N-terminal section; belongs to the N-acetylglucosamine-1-phosphate uridyltransferase family. This sequence in the C-terminal section; belongs to the transferase hexapeptide repeat family. Homotrimer. Requires Mg(2+) as cofactor.

Its subcellular location is the cytoplasm. The catalysed reaction is alpha-D-glucosamine 1-phosphate + acetyl-CoA = N-acetyl-alpha-D-glucosamine 1-phosphate + CoA + H(+). It catalyses the reaction N-acetyl-alpha-D-glucosamine 1-phosphate + UTP + H(+) = UDP-N-acetyl-alpha-D-glucosamine + diphosphate. It participates in nucleotide-sugar biosynthesis; UDP-N-acetyl-alpha-D-glucosamine biosynthesis; N-acetyl-alpha-D-glucosamine 1-phosphate from alpha-D-glucosamine 6-phosphate (route II): step 2/2. It functions in the pathway nucleotide-sugar biosynthesis; UDP-N-acetyl-alpha-D-glucosamine biosynthesis; UDP-N-acetyl-alpha-D-glucosamine from N-acetyl-alpha-D-glucosamine 1-phosphate: step 1/1. The protein operates within bacterial outer membrane biogenesis; LPS lipid A biosynthesis. Functionally, catalyzes the last two sequential reactions in the de novo biosynthetic pathway for UDP-N-acetylglucosamine (UDP-GlcNAc). The C-terminal domain catalyzes the transfer of acetyl group from acetyl coenzyme A to glucosamine-1-phosphate (GlcN-1-P) to produce N-acetylglucosamine-1-phosphate (GlcNAc-1-P), which is converted into UDP-GlcNAc by the transfer of uridine 5-monophosphate (from uridine 5-triphosphate), a reaction catalyzed by the N-terminal domain. This is Bifunctional protein GlmU from Clostridium botulinum (strain Eklund 17B / Type B).